A 207-amino-acid chain; its full sequence is GTP cyclohydrolase-2 (207 aa).

49–53 (RTHSE) serves as a coordination point for GTP. Zn(2+) contacts are provided by C54, C65, and C67. GTP is bound by residues Q70, 92 to 94 (EGR), and T114. The active-site Proton acceptor is the D126. The active-site Nucleophile is the R128. GTP is bound by residues T149 and K154.

This sequence belongs to the GTP cyclohydrolase II family. It depends on Zn(2+) as a cofactor.

The catalysed reaction is GTP + 4 H2O = 2,5-diamino-6-hydroxy-4-(5-phosphoribosylamino)-pyrimidine + formate + 2 phosphate + 3 H(+). The protein operates within cofactor biosynthesis; riboflavin biosynthesis; 5-amino-6-(D-ribitylamino)uracil from GTP: step 1/4. Its function is as follows. Catalyzes the conversion of GTP to 2,5-diamino-6-ribosylamino-4(3H)-pyrimidinone 5'-phosphate (DARP), formate and pyrophosphate. The protein is GTP cyclohydrolase-2 of Hahella chejuensis (strain KCTC 2396).